A 247-amino-acid polypeptide reads, in one-letter code: Carboxy-S-adenosyl-L-methionine synthase (247 aa).

S-adenosyl-L-methionine-binding positions include tyrosine 40, 65–67, 90–91, 122–123, asparagine 137, and arginine 204; these read GAS, DN, and DI.

Belongs to the class I-like SAM-binding methyltransferase superfamily. Cx-SAM synthase family. In terms of assembly, homodimer.

It carries out the reaction prephenate + S-adenosyl-L-methionine = carboxy-S-adenosyl-L-methionine + 3-phenylpyruvate + H2O. Its function is as follows. Catalyzes the conversion of S-adenosyl-L-methionine (SAM) to carboxy-S-adenosyl-L-methionine (Cx-SAM). The sequence is that of Carboxy-S-adenosyl-L-methionine synthase from Pseudomonas putida (strain GB-1).